A 210-amino-acid polypeptide reads, in one-letter code: Synaptosomal-associated protein 23 (210 aa).

Position 1 is an N-acetylmethionine (M1). Phosphoserine is present on residues S5, S20, S23, and S34. The t-SNARE coiled-coil homology 1 domain maps to 14-76 (HQVTDESLES…REAEKTLTEL (63 aa)). A coiled-coil region spans residues 23–76 (STRRILGLAIESQDAGIKTITMLDEQGEQLNRIEEGMDQINKDMREAEKTLTEL). 5 S-palmitoyl cysteine lipidation sites follow: C79, C80, C83, C85, and C87. Residues 104 to 136 (GDGGDSSPSNVVSKQPSRITNGQPQQTTGAASG) form a disordered region. Residues 109 to 133 (SSPSNVVSKQPSRITNGQPQQTTGA) are compositionally biased toward polar residues. A phosphoserine mark is found at S110 and S160. A t-SNARE coiled-coil homology 2 domain is found at 145-207 (DAREDEMEEN…DIANTRAKKL (63 aa)).

This sequence belongs to the SNAP-25 family. As to quaternary structure, homotetramer (via coiled-coil domain), also forms heterotetramers with STX4 and VAMP3. Found in a complex with VAMP8 and STX1A. Found in a complex with VAMP8 and STX4 in pancreas. Interacts simultaneously with SNAPIN and SYN4. Interacts with STX1A. Interacts with STX12. Interacts tightly to multiple syntaxins and synaptobrevins/VAMPs. Interacts with ZDHHC13 (via ANK repeats). Interacts with ZDHHC17 (via ANK repeats).

It localises to the cell membrane. The protein localises to the synapse. It is found in the synaptosome. Its subcellular location is the cytoplasmic vesicle membrane. Its function is as follows. Essential component of the high affinity receptor for the general membrane fusion machinery and an important regulator of transport vesicle docking and fusion. This chain is Synaptosomal-associated protein 23 (Snap23), found in Rattus norvegicus (Rat).